A 177-amino-acid chain; its full sequence is Adenylyl-sulfate kinase (177 aa).

Position 12–19 (12–19) interacts with ATP; it reads GLSGAGKT. Residue Ser86 is the Phosphoserine intermediate of the active site.

The protein belongs to the APS kinase family.

It catalyses the reaction adenosine 5'-phosphosulfate + ATP = 3'-phosphoadenylyl sulfate + ADP + H(+). Its pathway is sulfur metabolism; hydrogen sulfide biosynthesis; sulfite from sulfate: step 2/3. Functionally, catalyzes the synthesis of activated sulfate. The sequence is that of Adenylyl-sulfate kinase from Picosynechococcus sp. (strain ATCC 27264 / PCC 7002 / PR-6) (Agmenellum quadruplicatum).